The chain runs to 396 residues: E3 ubiquitin-protein ligase NHLRC1 (396 aa).

An RING-type zinc finger spans residues 23–69 (CKVCFERFGHRQQRRPRNLPCGHVVCLACVAALAHPRTLALECPFCR). 6 NHL repeats span residues 110-154 (ALTC…FDSG), 158-201 (AHQF…FDFF), 202-242 (GQIK…LEAD), 245-298 (EGVL…FNSS), 299-347 (MQLI…LGKP), and 348-391 (EEFP…FKVM).

As to quaternary structure, interacts with AGL. Interacts (via the NHL repeats) with EPM2A/laforin. Forms a complex with EPM2A/laforin and HSP70.

It is found in the endoplasmic reticulum. Its subcellular location is the nucleus. The enzyme catalyses S-ubiquitinyl-[E2 ubiquitin-conjugating enzyme]-L-cysteine + [acceptor protein]-L-lysine = [E2 ubiquitin-conjugating enzyme]-L-cysteine + N(6)-ubiquitinyl-[acceptor protein]-L-lysine.. Its pathway is protein modification; protein ubiquitination. E3 ubiquitin-protein ligase. Together with the phosphatase EPM2A/laforin, appears to be involved in the clearance of toxic polyglucosan and protein aggregates via multiple pathways. In complex with EPM2A/laforin and HSP70, suppresses the cellular toxicity of misfolded proteins by promoting their degradation through the ubiquitin-proteasome system (UPS). Ubiquitinates the glycogen-targeting protein phosphatase subunits PPP1R3C/PTG and PPP1R3D in a laforin-dependent manner and targets them for proteasome-dependent degradation, thus decreasing glycogen accumulation. Polyubiquitinates EPM2A/laforin and ubiquitinates AGL and targets them for proteasome-dependent degradation. Also promotes proteasome-independent protein degradation through the macroautophagy pathway. This Rattus norvegicus (Rat) protein is E3 ubiquitin-protein ligase NHLRC1 (Nhlrc1).